A 349-amino-acid chain; its full sequence is Peroxisomal acyl-coenzyme A thioester hydrolase 1 (349 aa).

Catalysis depends on charge relay system residues Asp259, Ser282, and Gln333. The Microbody targeting signal motif lies at 347 to 349 (AKF).

The protein belongs to the C/M/P thioester hydrolase family.

The protein localises to the peroxisome. The enzyme catalyses hexadecanoyl-CoA + H2O = hexadecanoate + CoA + H(+). Functionally, acyl-coenzyme A (acyl-CoA) thioesterases are a group of enzymes that catalyze the hydrolysis of acyl-CoAs to the free fatty acid and coenzyme A (CoASH), providing the potential to regulate intracellular levels of acyl-CoAs, free fatty acids and CoASH. Contributes to growth on fatty acids. The chain is Peroxisomal acyl-coenzyme A thioester hydrolase 1 (TES1) from Saccharomyces cerevisiae (strain ATCC 204508 / S288c) (Baker's yeast).